The primary structure comprises 427 residues: Trigger factor (427 aa).

The PPIase FKBP-type domain occupies 163–248; the sequence is GDTVVIDFVG…IHEVKAKEVP (86 aa).

Belongs to the FKBP-type PPIase family. Tig subfamily.

The protein localises to the cytoplasm. It catalyses the reaction [protein]-peptidylproline (omega=180) = [protein]-peptidylproline (omega=0). Its function is as follows. Involved in protein export. Acts as a chaperone by maintaining the newly synthesized protein in an open conformation. Functions as a peptidyl-prolyl cis-trans isomerase. The polypeptide is Trigger factor (Streptococcus pneumoniae serotype 2 (strain D39 / NCTC 7466)).